The sequence spans 559 residues: DNA primase (559 aa).

The CHC2-type zinc finger occupies 37-61 (CPFHEERSASFSVNQVKGFYYCFGC). Residues 246 to 327 (KQVIVTEGYL…KGGVILFENN (82 aa)) enclose the Toprim domain. Residues E252, D296, and D298 each contribute to the Mg(2+) site.

This sequence belongs to the DnaG primase family. As to quaternary structure, monomer. Interacts with DnaB. Requires Zn(2+) as cofactor. The cofactor is Mg(2+).

It catalyses the reaction ssDNA + n NTP = ssDNA/pppN(pN)n-1 hybrid + (n-1) diphosphate.. Its function is as follows. RNA polymerase that catalyzes the synthesis of short RNA molecules used as primers for DNA polymerase during DNA replication. This Helicobacter pylori (strain J99 / ATCC 700824) (Campylobacter pylori J99) protein is DNA primase.